Consider the following 122-residue polypeptide: Large ribosomal subunit protein bL12 (122 aa).

This sequence belongs to the bacterial ribosomal protein bL12 family. In terms of assembly, homodimer. Part of the ribosomal stalk of the 50S ribosomal subunit. Forms a multimeric L10(L12)X complex, where L10 forms an elongated spine to which 2 to 4 L12 dimers bind in a sequential fashion. Binds GTP-bound translation factors.

In terms of biological role, forms part of the ribosomal stalk which helps the ribosome interact with GTP-bound translation factors. Is thus essential for accurate translation. The polypeptide is Large ribosomal subunit protein bL12 (Streptococcus thermophilus (strain ATCC BAA-491 / LMD-9)).